The following is a 762-amino-acid chain: uncharacterized protein (762 aa).

Residues 334–542 (IIDILSNYLI…SDEEIAEHIL (209 aa)) enclose the MCM domain. 384 to 391 (TDPGIGKS) lines the ATP pocket.

Belongs to the MCM family.

This is an uncharacterized protein from Methanocaldococcus jannaschii (strain ATCC 43067 / DSM 2661 / JAL-1 / JCM 10045 / NBRC 100440) (Methanococcus jannaschii).